Here is a 70-residue protein sequence, read N- to C-terminus: Beta-insect excitatory toxin LqqIT1 (70 aa).

The region spanning 2-65 (KNGYAVDSSG…ISDARKKYCD (64 aa)) is the LCN-type CS-alpha/beta domain. Intrachain disulfides connect C16-C37, C22-C42, C26-C44, and C38-C64.

This sequence belongs to the long (4 C-C) scorpion toxin superfamily. Sodium channel inhibitor family. Beta subfamily. As to expression, expressed by the venom gland.

It localises to the secreted. Excitatory insect beta-toxins induce a spastic paralysis. They bind voltage-independently at site-4 of sodium channels (Nav) and shift the voltage of activation toward more negative potentials thereby affecting sodium channel activation and promoting spontaneous and repetitive firing. In vivo, this toxin induces a fast excitatory contraction paralysis on fly larvae. It is active only on insects. This Leiurus quinquestriatus quinquestriatus (Egyptian scorpion) protein is Beta-insect excitatory toxin LqqIT1.